The chain runs to 210 residues: Shikimate kinase (210 aa).

34–39 (GVGKSV) serves as a coordination point for ATP. Ser38 provides a ligand contact to Mg(2+). Substrate-binding residues include Asp56, Arg80, and Gly102. Arg140 serves as a coordination point for ATP. Arg159 provides a ligand contact to substrate.

The protein belongs to the shikimate kinase family. In terms of assembly, monomer. It depends on Mg(2+) as a cofactor.

It localises to the cytoplasm. It catalyses the reaction shikimate + ATP = 3-phosphoshikimate + ADP + H(+). Its pathway is metabolic intermediate biosynthesis; chorismate biosynthesis; chorismate from D-erythrose 4-phosphate and phosphoenolpyruvate: step 5/7. Catalyzes the specific phosphorylation of the 3-hydroxyl group of shikimic acid using ATP as a cosubstrate. This chain is Shikimate kinase, found in Bartonella henselae (strain ATCC 49882 / DSM 28221 / CCUG 30454 / Houston 1) (Rochalimaea henselae).